The primary structure comprises 292 residues: Protease HtpX (292 aa).

A run of 2 helical transmembrane segments spans residues 5-25 (IFLFLLTNVAVLMLAGVVMSV) and 34-54 (SGLLVMAAIFGFGGSFISLLL). Position 140 (His140) interacts with Zn(2+). Glu141 is an active-site residue. Residue His144 coordinates Zn(2+). Transmembrane regions (helical) follow at residues 155–175 (LLQGVLNTFVIVLARVVGGII) and 193–213 (IIVFVLEMVFGMFATMIAMWF). A Zn(2+)-binding site is contributed by Glu218.

Belongs to the peptidase M48B family. Requires Zn(2+) as cofactor.

It localises to the cell inner membrane. This chain is Protease HtpX, found in Xanthomonas oryzae pv. oryzae (strain MAFF 311018).